The chain runs to 445 residues: Xylose isomerase (445 aa).

Active-site residues include His107 and Asp110. Mg(2+)-binding residues include Glu238, Glu274, His277, Asp302, Asp313, Asp315, and Asp345.

Belongs to the xylose isomerase family. Homotetramer. Mg(2+) serves as cofactor.

It localises to the cytoplasm. It carries out the reaction alpha-D-xylose = alpha-D-xylulofuranose. The chain is Xylose isomerase from Bacillus pumilus (strain SAFR-032).